Here is a 448-residue protein sequence, read N- to C-terminus: N-succinylarginine dihydrolase (448 aa).

Substrate is bound by residues 19–28, Asn-110, and 137–138; these read GGLSYGNVAS and HR. Residue Glu-174 is part of the active site. Arg-214 provides a ligand contact to substrate. His-250 is an active-site residue. Residues Asp-252 and Asn-365 each contribute to the substrate site. Cys-371 acts as the Nucleophile in catalysis.

It belongs to the succinylarginine dihydrolase family. In terms of assembly, homodimer.

It carries out the reaction N(2)-succinyl-L-arginine + 2 H2O + 2 H(+) = N(2)-succinyl-L-ornithine + 2 NH4(+) + CO2. Its pathway is amino-acid degradation; L-arginine degradation via AST pathway; L-glutamate and succinate from L-arginine: step 2/5. Catalyzes the hydrolysis of N(2)-succinylarginine into N(2)-succinylornithine, ammonia and CO(2). This chain is N-succinylarginine dihydrolase, found in Pseudomonas fluorescens (strain Pf0-1).